The chain runs to 675 residues: uncharacterized protein (675 aa).

4 helical membrane passes run 2-22 (QHTFIYDTCLWILSILIDFFF), 397-417 (LFLLALGALPGAILFSPVFIA), 448-468 (LLVALGMTPILYSFYALLCCY), and 481-501 (IFVYTVPIISTFLFPMVTYAA). 2 disordered regions span residues 616–635 (YSPNPSALPPSDEEEKDIND) and 646–675 (QRMGQRMTEIRSRDTPPEEVFSESDEELSD). Acidic residues predominate over residues 665 to 675 (VFSESDEELSD). Phosphoserine is present on Ser669.

This sequence belongs to the 1-acyl-sn-glycerol-3-phosphate acyltransferase family.

It localises to the endoplasmic reticulum membrane. This is an uncharacterized protein from Schizosaccharomyces pombe (strain 972 / ATCC 24843) (Fission yeast).